Here is a 108-residue protein sequence, read N- to C-terminus: DNA-directed RNA polymerase III subunit RPC10 (108 aa).

6 residues coordinate Zn(2+): Cys5, Cys8, Cys25, Cys28, Cys69, and Cys72. A C4-type zinc finger spans residues 5 to 28 (CPGCGNGLIVEEGQRCHRFACNTC). A TFIIS-type zinc finger spans residues 65-107 (TAEPCPKCEHPRAYFMQLQTRYADEPMTTFYKCCNAQCGHRWR). The Hairpin signature appears at 88–89 (DE). Zn(2+)-binding residues include Cys98 and Cys102.

It belongs to the archaeal RpoM/eukaryotic RPA12/RPB9/RPC11 RNA polymerase family. Component of the RNA polymerase III complex consisting of 17 subunits: a ten-subunit horseshoe-shaped catalytic core composed of POLR3A/RPC1, POLR3B/RPC2, POLR1C/RPAC1, POLR1D/RPAC2, POLR3K/RPC10, POLR2E/RPABC1, POLR2F/RPABC2, POLR2H/RPABC3, POLR2K/RPABC4 and POLR2L/RPABC5; a mobile stalk composed of two subunits POLR3H/RPC8 and CRCP/RPC9, protruding from the core and functioning primarily in transcription initiation; and additional subunits homologous to general transcription factors of the RNA polymerase II machinery, POLR3C/RPC3-POLR3F/RPC6-POLR3G/RPC7 heterotrimer required for transcription initiation and POLR3D/RPC4-POLR3E/RPC5 heterodimer involved in both transcription initiation and termination.

The protein resides in the nucleus. Its function is as follows. Core component of RNA polymerase III (Pol III) which synthesizes small non-coding RNAs using the four ribonucleoside triphosphates as substrates. Can mediate Pol I proofreading of the nascent RNA transcript. Anchors into the Pol III active site to constantly monitor transcription fidelity, cleaves mis-incorporated 5'-ribonucleotides and restarts the transcription process. Once Pol III reaches the poly(dT) termination signal, can induce Pol III clamp opening and transcription termination. Pol III plays an important role in sensing and limiting infection by intracellular bacteria and DNA viruses. Acts as a nuclear and cytosolic DNA sensor involved in innate immune response. Can sense non-self dsDNA that serves as template for transcription into dsRNA. The non-self RNA polymerase III transcripts, such as Epstein-Barr virus-encoded RNAs (EBERs) induce type I interferon and NF-kappa-B through the RIG-I pathway. The sequence is that of DNA-directed RNA polymerase III subunit RPC10 (POLR3K) from Bos taurus (Bovine).